We begin with the raw amino-acid sequence, 1388 residues long: Putative ATP-dependent RNA helicase DHX57 (1388 aa).

Residues 1-11 are compositionally biased toward basic residues; that stretch reads MSSSVRRKGKP. 2 disordered regions span residues 1 to 107 and 121 to 154; these read MSSS…MTSE and EQGA…AGQE. Residues 34–51 are compositionally biased toward gly residues; sequence HGGGGGGGGSCGGGGGGS. A compositionally biased stretch (basic and acidic residues) spans 79 to 89; that stretch reads DSNKSKGETRP. Residues Ser-128 and Ser-133 each carry the phosphoserine modification. Residues 175 to 220 form the UBA domain; it reads PVPECAVSPLAVQKLSRYGFHTEHCQLALRICDGDLGAALEHLLRQ. A C3H1-type zinc finger spans residues 299 to 326; that stretch reads DTSPETCKFYLKGNCKFGSKCKFKHEVP. Ser-475 is subject to Phosphoserine. The region spanning 555-722 is the Helicase ATP-binding domain; the sequence is LKLLSKHQVV…FSYCPVITIP (168 aa). ATP is bound at residue 568-575; the sequence is GMTGCGKT. A DEVH box motif is present at residues 669–672; sequence DEVH. The 181-residue stretch at 832–1012 folds into the Helicase C-terminal domain; that stretch reads LIEALLEWIV…QLCLRIKILE (181 aa).

It belongs to the DEAD box helicase family. DEAH subfamily.

The enzyme catalyses ATP + H2O = ADP + phosphate + H(+). Probable ATP-binding RNA helicase. This is Putative ATP-dependent RNA helicase DHX57 (Dhx57) from Mus musculus (Mouse).